Reading from the N-terminus, the 219-residue chain is Transmembrane emp24 domain-containing protein 10 (219 aa).

A signal peptide spans 1–31; the sequence is MSGLSGPPARRGPFPLALLLLFLLGPRLVLA. A required for interaction with STX17 region spans residues 1–142; sequence MSGLSGPPAR…KNYEEIAKVE (142 aa). The Lumenal segment spans residues 32-185; that stretch reads ISFHLPINSR…RDTNESTNTR (154 aa). Residues 41–193 form the GOLD domain; sequence RKCLREEIHK…TRVLYFSIFS (153 aa). Residues 147–178 form a required for TMED10 and TMED2 cis-Golgi network localization region; it reads LEVELRRLEDLSESIVNDFAYMKKREEEMRDT. Dimethylated arginine is present on residues Arg-171 and Arg-176. An N-linked (GlcNAc...) asparagine glycan is attached at Asn-179. Residues 186 to 206 traverse the membrane as a helical segment; it reads VLYFSIFSMFCLIGLATWQVF. The interaction with COPG1 stretch occupies residues 204-219; it reads QVFYLRRFFKAKKLIE. The Cytoplasmic segment spans residues 207-219; it reads YLRRFFKAKKLIE. The tract at residues 207–219 is interaction with ARF1 and IL1B; the sequence is YLRRFFKAKKLIE. Positions 211–212 match the COPII vesicle coat-binding motif; that stretch reads FF. Positions 211–219 match the COPI vesicle coat-binding motif; it reads FFKAKKLIE.

This sequence belongs to the EMP24/GP25L family. As to quaternary structure, predominantly dimeric and to a lesser extent monomeric in the ER. Monomer and dimer in ERGIC and cis-Golgi network. Forms homooligomer (via GOLD domain); the assembly is promoted by direct binding with leaderless cargos and may form a protein channel that facilitates cargo entry into the ERGIC. Forms heterooligomeric complexes with other members of the p24 family such as TMED2, TMED7 and TMED9. Interacts (via GOLD domain) with TMED2 (via GOLD domain); the complex is required for export of TMED10 from the ER to the cis-Golgi network; the complex is proposed to be involved in cis-Golgi network dynamics and / or biogenesis. Associates with the COPI vesicle coat subunits (coatomer). Tetramerization of the cytoplasmic domain at the Golgi membrane in vitro; the complex is proposed to interact with COPI coatomer and induce budding of the vesicles. Interacts with COPG1; the interaction involves TMED10 homodimer. Interacts with ARF1 (GDP-bound); the interaction probably involves a TMED10 oligomer. Interacts with SEC23A, SEC24B, SEC24C and SEC24D components of the coat protein complex II/COPII, indicative of an association of TMED10 with the COPII vesicle coat. Interacts with CD59. Interacts with MPPE1/PGAP5; the complex might recruit and sort GPI-anchored proteins to the ER-exit site, or the interaction might lead to recycling of PGAP5 between the ER and the Golgi. Interacts with F2LR1/PAR2. Interacts with KDELR2/ERD2; the interaction is disrupted by KDELR2 ligand. Found in a complex composed at least of SURF4, TMED2 and TMED10. Associates with the presenilin-dependent gamma-secretase complex. Interacts with STX17; the interaction is direct. Interacts with IL-1; the interaction is direct. Interacts with RAB21 (active GTP-bound form); the interaction is indirect and regulates TMED10 abundance and localization at the Golgi.

It is found in the endoplasmic reticulum membrane. The protein localises to the endoplasmic reticulum-Golgi intermediate compartment membrane. Its subcellular location is the golgi apparatus membrane. The protein resides in the golgi apparatus. It localises to the cis-Golgi network membrane. It is found in the trans-Golgi network membrane. The protein localises to the cytoplasmic vesicle. Its subcellular location is the secretory vesicle membrane. The protein resides in the cell membrane. It localises to the melanosome. Cargo receptor involved in protein vesicular trafficking and quality control in the endoplasmic reticulum (ER) and Golgi. The p24 protein family is a group of transmembrane proteins that bind coat protein complex I/COPI and coat protein complex II/COPII involved in vesicular trafficking between the membranes. Acts at the lumenal side for incorporation of secretory cargo molecules into transport vesicles and involved in vesicle coat formation at the cytoplasmic side. Mainly functions in the early secretory pathway and cycles between the ER, ER-Golgi intermediate compartment (ERGIC) and Golgi, mediating cargo transport through COPI and COPII-coated vesicles. In COPII vesicle-mediated anterograde transport, involved in the transport of GPI-anchored proteins by acting together with TMED2 as their cargo receptor; the function specifically implies SEC24C and SEC24D of the COPII vesicle coat and lipid raft-like microdomains of the ER. Recognizes GPI anchors structural remodeled in the ER by the GPI inositol-deacylase/PGAP1 and the metallophosphoesterase MPPE1/PGAP5. In COPI vesicle-mediated retrograde transport, involved in the biogenesis of COPI vesicles and vesicle coat recruitment. Involved in trafficking of amyloid beta A4 protein and soluble APP-beta release (independent from the modulation of gamma-secretase activity). Involved in the KDELR2-mediated retrograde transport of the toxin A subunit (CTX-A-K63)together with COPI and the COOH terminus of KDELR2. On Golgi membranes, acts as a primary receptor for ARF1-GDP, a GTP-binding protein involved in COPI-vesicle formation. Increases coatomer-dependent GTPase-activating activity of ARFGAP2 which mediates the hydrolysis of ARF1-bound GTP and therefore modulates protein trafficking from the Golgi apparatus. Involved in the exocytic trafficking of G protein-coupled receptors F2LR1/PAR2 (trypsin and tryspin-like enzyme receptor), OPRM1 (opioid receptor) and P2RY4 (UTD and UDP receptor) from the Golgi to the plasma membrane, thus contributing to receptor resensitization. In addition to its cargo receptor activity, may also act as a protein channel after oligomerization, facilitating the post-translational entry of leaderless cytoplasmic cargo into the ERGIC. Involved in the translocation into ERGIC, the vesicle entry and the secretion of leaderless cargos (lacking the secretion signal sequence), including the mature form of interleukin 1/IL-1 family members, the alpha-crystallin B chain HSPB5, the carbohydrate-binding proteins galectin-1/LGALS1 and galectin-3/LGALS3, the microtubule-associated protein Tau/MAPT, and the annexin A1/ANXA1; the translocation process is dependent on cargo protein unfolding and enhanced by chaperones HSP90AB1 and HSP90B1/GRP9. Could also associates with the presenilin-dependent gamma-secretase complex in order to regulate gamma-cleavages of the amyloid beta A4 protein to yield amyloid-beta 40/Abeta40. This Homo sapiens (Human) protein is Transmembrane emp24 domain-containing protein 10.